We begin with the raw amino-acid sequence, 181 residues long: Malignant T-cell-amplified sequence 1-A (181 aa).

Residues 92 to 171 (LPHQQVDKGA…IGIENIHYLN (80 aa)) form the PUA domain.

It belongs to the MCTS1 family.

It is found in the cytoplasm. Functionally, plays a role as translation enhancer and involved in cell cycle regulation. In Xenopus laevis (African clawed frog), this protein is Malignant T-cell-amplified sequence 1-A (mcts1-a).